We begin with the raw amino-acid sequence, 140 residues long: MRHAKAGRKLNRTASHRKAMFANMAASLITHEQIVTTLPKAKEIRPIVEKLVTLGKRGDLHARRQAISQIRDAAVVSKLFDTIATRYATRNGGYLRIMKAGFRQGDNAAMAVIEFVDRDTYAKGAADKARVAAEEQAVAA.

Belongs to the bacterial ribosomal protein bL17 family. As to quaternary structure, part of the 50S ribosomal subunit. Contacts protein L32.

This chain is Large ribosomal subunit protein bL17, found in Rhizobium etli (strain CIAT 652).